The following is a 321-amino-acid chain: Quinol oxidase subunit 2 (321 aa).

The N-terminal stretch at 1–25 (MIFLFRALKPLLVLALLTVVFVLGG) is a signal peptide. C26 carries the N-palmitoyl cysteine lipid modification. C26 carries S-diacylglycerol cysteine lipidation. 2 consecutive transmembrane segments (helical) span residues 49-69 (SIGFMLFIVGVVFVLFTIILV) and 90-110 (TFLEVVWTVIPILIVIALSVP). The segment at 294-321 (QAVSPHSKTDPFENVKENEFKKSDDTEE) is disordered. The segment covering 300 to 321 (SKTDPFENVKENEFKKSDDTEE) has biased composition (basic and acidic residues).

The protein belongs to the cytochrome c oxidase subunit 2 family.

It is found in the cell membrane. The catalysed reaction is 2 a quinol + O2 = 2 a quinone + 2 H2O. In terms of biological role, catalyzes quinol oxidation with the concomitant reduction of oxygen to water. Major component for energy conversion during vegetative growth. Subunit II transfers the electrons from a quinol to the binuclear center of the catalytic subunit I. The protein is Quinol oxidase subunit 2 (qoxA) of Bacillus spizizenii (strain ATCC 23059 / NRRL B-14472 / W23) (Bacillus subtilis subsp. spizizenii).